The primary structure comprises 616 residues: Dihydroxy-acid dehydratase (616 aa).

Aspartate 81 lines the Mg(2+) pocket. Cysteine 122 provides a ligand contact to [2Fe-2S] cluster. Positions 123 and 124 each coordinate Mg(2+). N6-carboxylysine is present on lysine 124. Residue cysteine 195 participates in [2Fe-2S] cluster binding. Glutamate 491 lines the Mg(2+) pocket. The active-site Proton acceptor is the serine 517.

It belongs to the IlvD/Edd family. In terms of assembly, homodimer. [2Fe-2S] cluster is required as a cofactor. Requires Mg(2+) as cofactor.

The enzyme catalyses (2R)-2,3-dihydroxy-3-methylbutanoate = 3-methyl-2-oxobutanoate + H2O. The catalysed reaction is (2R,3R)-2,3-dihydroxy-3-methylpentanoate = (S)-3-methyl-2-oxopentanoate + H2O. It participates in amino-acid biosynthesis; L-isoleucine biosynthesis; L-isoleucine from 2-oxobutanoate: step 3/4. It functions in the pathway amino-acid biosynthesis; L-valine biosynthesis; L-valine from pyruvate: step 3/4. Functions in the biosynthesis of branched-chain amino acids. Catalyzes the dehydration of (2R,3R)-2,3-dihydroxy-3-methylpentanoate (2,3-dihydroxy-3-methylvalerate) into 2-oxo-3-methylpentanoate (2-oxo-3-methylvalerate) and of (2R)-2,3-dihydroxy-3-methylbutanoate (2,3-dihydroxyisovalerate) into 2-oxo-3-methylbutanoate (2-oxoisovalerate), the penultimate precursor to L-isoleucine and L-valine, respectively. The sequence is that of Dihydroxy-acid dehydratase from Salmonella heidelberg (strain SL476).